A 190-amino-acid chain; its full sequence is Potassium-transporting ATPase KdpC subunit (190 aa).

The helical transmembrane segment at 10 to 30 (TFLFLLLITGGVYPLLTTALG) threads the bilayer.

It belongs to the KdpC family. In terms of assembly, the system is composed of three essential subunits: KdpA, KdpB and KdpC.

The protein resides in the cell inner membrane. Part of the high-affinity ATP-driven potassium transport (or Kdp) system, which catalyzes the hydrolysis of ATP coupled with the electrogenic transport of potassium into the cytoplasm. This subunit acts as a catalytic chaperone that increases the ATP-binding affinity of the ATP-hydrolyzing subunit KdpB by the formation of a transient KdpB/KdpC/ATP ternary complex. The chain is Potassium-transporting ATPase KdpC subunit from Escherichia coli O7:K1 (strain IAI39 / ExPEC).